We begin with the raw amino-acid sequence, 345 residues long: Methylthioribose-1-phosphate isomerase (345 aa).

Residues 44 to 46 (RGA), arginine 86, and glutamine 194 contribute to the substrate site. The active-site Proton donor is aspartate 235. Substrate is bound at residue 245-246 (NK).

It belongs to the eIF-2B alpha/beta/delta subunits family. MtnA subfamily.

The catalysed reaction is 5-(methylsulfanyl)-alpha-D-ribose 1-phosphate = 5-(methylsulfanyl)-D-ribulose 1-phosphate. The protein operates within amino-acid biosynthesis; L-methionine biosynthesis via salvage pathway; L-methionine from S-methyl-5-thio-alpha-D-ribose 1-phosphate: step 1/6. In terms of biological role, catalyzes the interconversion of methylthioribose-1-phosphate (MTR-1-P) into methylthioribulose-1-phosphate (MTRu-1-P). The polypeptide is Methylthioribose-1-phosphate isomerase (Desulfitobacterium hafniense (strain Y51)).